A 220-amino-acid chain; its full sequence is MLHLIIAEAELELVPESIRDHPAVVNYARRRKKRPEEAILDSTYHHAALKKLPDGDRRGRPDIVHICLLNALESIANKEGFLRVYVHTRNDEVIHIKPETRLPRNYNRFLGLMESLFKKGAVPEGLELLRIEKKPLESLIEDINPDTVFIMHEEGELIRPRSFGEILASHQNPVVVVGGFPHGDFMRPIEGTKVSLYREPLMAWTVVSEVIVNFEAALGL.

Residues Gly-178, Gly-183, and 196 to 201 contribute to the S-adenosyl-L-methionine site; that span reads LYREPL.

This sequence belongs to the class IV-like SAM-binding methyltransferase superfamily. RNA methyltransferase NEP1 family. Homodimer.

It carries out the reaction a pseudouridine in rRNA + S-adenosyl-L-methionine = an N(1)-methylpseudouridine in rRNA + S-adenosyl-L-homocysteine + H(+). Methyltransferase involved in ribosomal biogenesis. Specifically catalyzes the N1-methylation of the pseudouridine corresponding to position 914 in M.jannaschii 16S rRNA. The sequence is that of Ribosomal RNA small subunit methyltransferase Nep1 from Thermococcus kodakarensis (strain ATCC BAA-918 / JCM 12380 / KOD1) (Pyrococcus kodakaraensis (strain KOD1)).